The chain runs to 319 residues: Ribosomal RNA small subunit methyltransferase H (319 aa).

Residues 39–41 (GGH), D59, F83, D104, and Q111 each bind S-adenosyl-L-methionine.

The protein belongs to the methyltransferase superfamily. RsmH family.

Its subcellular location is the cytoplasm. It carries out the reaction cytidine(1402) in 16S rRNA + S-adenosyl-L-methionine = N(4)-methylcytidine(1402) in 16S rRNA + S-adenosyl-L-homocysteine + H(+). In terms of biological role, specifically methylates the N4 position of cytidine in position 1402 (C1402) of 16S rRNA. The chain is Ribosomal RNA small subunit methyltransferase H from Ralstonia pickettii (strain 12J).